The primary structure comprises 264 residues: Tetraspanin-12 (264 aa).

The Cytoplasmic portion of the chain corresponds to 1–13; sequence MLRLSNAAVITTN. A helical transmembrane segment spans residues 14 to 34; sequence AILALIGLAALSFSVYVYVQG. The Extracellular segment spans residues 35 to 45; that stretch reads PSQCQRFVQNP. The chain crosses the membrane as a helical span at residues 46–66; it reads LIVTAALLFFISSLGLIAALY. The Cytoplasmic segment spans residues 67–75; it reads GSHIIITLY. Residues 76-96 traverse the membrane as a helical segment; the sequence is LFFLFLSILLLLVLSVFIFLV. At 97–228 the chain is on the extracellular side; the sequence is TNPTAGKALS…VLKGIRKRWR (132 aa). Asn-180 carries N-linked (GlcNAc...) asparagine glycosylation. The chain crosses the membrane as a helical span at residues 229 to 249; the sequence is ILIVVNLLLILLVVFLYSCGC. Residues 250-264 lie on the Cytoplasmic side of the membrane; that stretch reads CVRKNNRVPWKRRFF.

The protein belongs to the tetraspanin (TM4SF) family.

It localises to the membrane. Its function is as follows. May be involved in the regulation of cell differentiation. The polypeptide is Tetraspanin-12 (TET12) (Arabidopsis thaliana (Mouse-ear cress)).